Consider the following 380-residue polypeptide: Peroxisomal membrane protein PEX13 (380 aa).

Residues 1–30 (MSDSSAPDLPSKPSSLNAGQSSSLQTTNTG) are disordered. Over 1–230 (MSDSSAPDLP…NKNTNKLSLK (230 aa)) the chain is Lumenal. Residues 12–30 (KPSSLNAGQSSSLQTTNTG) are compositionally biased toward polar residues. Residues 231–251 (PLLLFLAAVVGFPYLLKKLIA) form a helical membrane-spanning segment. Residues 252–380 (HLAETSQMNG…DSTEFQKMKT (129 aa)) are Cytoplasmic-facing. The SH3 domain occupies 277-344 (TKLEFARALY…PYNYVEIIER (68 aa)).

The protein belongs to the peroxin-13 family. Interacts (via SH3 domain) with PEX14 (via SH3-binding motif); forming the PEX13-PEX14 docking complex.

The protein resides in the peroxisome membrane. Its function is as follows. Component of the PEX13-PEX14 docking complex, a translocon channel that specifically mediates the import of peroxisomal cargo proteins bound to PEX5 receptor. The PEX13-PEX14 docking complex forms a large import pore which can be opened to a diameter of about 9 nm. Mechanistically, PEX5 receptor along with cargo proteins associates with the PEX14 subunit of the PEX13-PEX14 docking complex in the cytosol, leading to the insertion of the receptor into the organelle membrane with the concomitant translocation of the cargo into the peroxisome matrix. The polypeptide is Peroxisomal membrane protein PEX13 (PEX13) (Komagataella pastoris (Yeast)).